The chain runs to 152 residues: Arginine repressor (152 aa).

It belongs to the ArgR family.

The protein localises to the cytoplasm. Its pathway is amino-acid biosynthesis; L-arginine biosynthesis [regulation]. In terms of biological role, regulates arginine biosynthesis genes. The sequence is that of Arginine repressor from Caldicellulosiruptor saccharolyticus (strain ATCC 43494 / DSM 8903 / Tp8T 6331).